The sequence spans 273 residues: Dermonecrotic toxin SdSicTox-betaIIB1bxiv (273 aa).

Residue His-4 is part of the active site. Glu-24 and Asp-26 together coordinate Mg(2+). His-40 serves as the catalytic Nucleophile. 2 disulfide bridges follow: Cys-44-Cys-50 and Cys-46-Cys-189. Asp-84 is a Mg(2+) binding site.

The protein belongs to the arthropod phospholipase D family. Class II subfamily. Mg(2+) serves as cofactor. In terms of tissue distribution, expressed by the venom gland.

The protein resides in the secreted. The enzyme catalyses an N-(acyl)-sphingosylphosphocholine = an N-(acyl)-sphingosyl-1,3-cyclic phosphate + choline. It catalyses the reaction an N-(acyl)-sphingosylphosphoethanolamine = an N-(acyl)-sphingosyl-1,3-cyclic phosphate + ethanolamine. The catalysed reaction is a 1-acyl-sn-glycero-3-phosphocholine = a 1-acyl-sn-glycero-2,3-cyclic phosphate + choline. It carries out the reaction a 1-acyl-sn-glycero-3-phosphoethanolamine = a 1-acyl-sn-glycero-2,3-cyclic phosphate + ethanolamine. Functionally, dermonecrotic toxins cleave the phosphodiester linkage between the phosphate and headgroup of certain phospholipids (sphingolipid and lysolipid substrates), forming an alcohol (often choline) and a cyclic phosphate. This toxin acts on sphingomyelin (SM). It may also act on ceramide phosphoethanolamine (CPE), lysophosphatidylcholine (LPC) and lysophosphatidylethanolamine (LPE), but not on lysophosphatidylserine (LPS), and lysophosphatidylglycerol (LPG). It acts by transphosphatidylation, releasing exclusively cyclic phosphate products as second products. Induces dermonecrosis, hemolysis, increased vascular permeability, edema, inflammatory response, and platelet aggregation. This chain is Dermonecrotic toxin SdSicTox-betaIIB1bxiv, found in Sicarius cf. damarensis (strain GJB-2008) (Six-eyed sand spider).